The following is a 461-amino-acid chain: Peptidyl-prolyl cis-trans isomerase-like 4 (461 aa).

One can recognise a PPIase cyclophilin-type domain in the interval 1–171 (MSVLLETSLG…KDIRIRHTVI (171 aa)). A coiled-coil region spans residues 205–234 (EELDDNMDEESMEKLRREREARAQALTLEM). The 79-residue stretch at 248-326 (NVLFVCKLNP…HRIHVDFSQS (79 aa)) folds into the RRM domain. Positions 341-461 (KRSGQRGGFG…DERYRERRRR (121 aa)) are disordered. 2 stretches are compositionally biased toward basic and acidic residues: residues 365-384 (DNAR…GDKA) and 398-461 (SNRD…RRRR).

Belongs to the cyclophilin-type PPIase family. PPIL4 subfamily.

It localises to the nucleus. It carries out the reaction [protein]-peptidylproline (omega=180) = [protein]-peptidylproline (omega=0). Its function is as follows. PPIases accelerate the folding of proteins. It catalyzes the cis-trans isomerization of proline imidic peptide bonds in oligopeptides. This chain is Peptidyl-prolyl cis-trans isomerase-like 4 (cyp6), found in Aspergillus oryzae (strain ATCC 42149 / RIB 40) (Yellow koji mold).